The primary structure comprises 375 residues: MESNKDEAERCISIALKAIQSNQPDRALRFLEKAQRLYPTPRVRALIESLNQKPQTAGDQPPPTDTTHATHRKAGGTDAPSANGEAGGESTKGYTAEQVAAVKRVKQCKDYYEILGVSRGASDEDLKKAYRRLALKFHPDKNHAPGATEAFKAIGTAYAVLSNPEKRKQYDQFGDDKSQAARHGHGHGDFHRGFEADISPEDLFNMFFGGGFPSSNVHVYSNGRMRYTYQQRQDRRDNQGDGGLGVFVQLMPILILILVSALSQLMVSSPPYSLSPRPSVGHIHRRVTDHLGVVYYVGDTFSEEYTGSSLKTVERNVEDDYIANLRNNCWKEKQQKEGLLYRARYFGDTDMYHRAQKMGTPSCSRLSEVQASLHG.

Met1 is modified (N-acetylmethionine). Residues 1 to 243 lie on the Cytoplasmic side of the membrane; the sequence is MESNKDEAER…DRRDNQGDGG (243 aa). A disordered region spans residues 45-92; that stretch reads ALIESLNQKPQTAGDQPPPTDTTHATHRKAGGTDAPSANGEAGGESTK. Polar residues predominate over residues 49 to 58; it reads SLNQKPQTAG. Residues 112–176 enclose the J domain; sequence YEILGVSRGA…RKQYDQFGDD (65 aa). Residue His185 is modified to Pros-methylhistidine. The helical transmembrane segment at 244-264 threads the bilayer; sequence LGVFVQLMPILILILVSALSQ. Residues 265–375 lie on the Lumenal side of the membrane; it reads LMVSSPPYSL…LSEVQASLHG (111 aa).

The protein belongs to the DnaJ family. DNAJB12/DNAJB14 subfamily. As to quaternary structure, homodimer and homotetramer. Interacts (via J domain) with HSPA8/Hsc70. Forms a multiprotein complex, at least composed of DNAJB12, DNAJB14, HSPA8/Hsc70 and SGTA; interaction with DNAJB14 and HSPA8/Hsc70 is direct. Methylated at His-185 by METTL9.

It localises to the endoplasmic reticulum membrane. It is found in the nucleus membrane. Functionally, acts as a co-chaperone with HSPA8/Hsc70; required to promote protein folding and trafficking, prevent aggregation of client proteins, and promote unfolded proteins to endoplasmic reticulum-associated degradation (ERAD) pathway. Acts by determining HSPA8/Hsc70's ATPase and polypeptide-binding activities. Can also act independently of HSPA8/Hsc70: together with DNAJB14, acts as a chaperone that promotes maturation of potassium channels KCND2 and KCNH2 by stabilizing nascent channel subunits and assembling them into tetramers. While stabilization of nascent channel proteins is dependent on HSPA8/Hsc70, the process of oligomerization of channel subunits is independent of HSPA8/Hsc70. When overexpressed, forms membranous structures together with DNAJB14 and HSPA8/Hsc70 within the nucleus; the role of these structures, named DJANGOs, is still unclear. Its function is as follows. (Microbial infection) In case of infection by polyomavirus, involved in the virus endoplasmic reticulum membrane penetration and infection. The chain is DnaJ homolog subfamily B member 12 from Homo sapiens (Human).